A 337-amino-acid polypeptide reads, in one-letter code: Glyceraldehyde-3-phosphate dehydrogenase (337 aa).

NAD(+) is bound by residues 12–13 (RI), D34, and K79. Residues 150–152 (SCT), T181, 210–211 (TG), and R233 contribute to the D-glyceraldehyde 3-phosphate site. Residue C151 is the Nucleophile of the active site. N315 provides a ligand contact to NAD(+).

It belongs to the glyceraldehyde-3-phosphate dehydrogenase family. In terms of assembly, homotetramer. Expressed in all tissues examined.

It is found in the cytoplasm. It carries out the reaction D-glyceraldehyde 3-phosphate + phosphate + NAD(+) = (2R)-3-phospho-glyceroyl phosphate + NADH + H(+). It participates in carbohydrate degradation; glycolysis; pyruvate from D-glyceraldehyde 3-phosphate: step 1/5. In Lentinula edodes (Shiitake mushroom), this protein is Glyceraldehyde-3-phosphate dehydrogenase (gpd).